A 347-amino-acid polypeptide reads, in one-letter code: Probable RNA methyltransferase Lcho_2507 (347 aa).

Glutamate 89 (proton acceptor) is an active-site residue. The Radical SAM core domain maps to 92–318 (LLPRDGLCVS…TKLRQSAGQD (227 aa)). Cysteine 99 and cysteine 323 are oxidised to a cystine. [4Fe-4S] cluster-binding residues include cysteine 106, cysteine 110, and cysteine 113. Residues 151-152 (GE), serine 181, 204-206 (SLH), and asparagine 280 contribute to the S-adenosyl-L-methionine site. The active-site S-methylcysteine intermediate is the cysteine 323.

This sequence belongs to the radical SAM superfamily. RlmN family. Requires [4Fe-4S] cluster as cofactor.

It is found in the cytoplasm. The chain is Probable RNA methyltransferase Lcho_2507 from Leptothrix cholodnii (strain ATCC 51168 / LMG 8142 / SP-6) (Leptothrix discophora (strain SP-6)).